Here is a 234-residue protein sequence, read N- to C-terminus: Orofacial cleft 1 candidate gene 1 protein homolog (234 aa).

Disordered stretches follow at residues 1–21 (MEKE…KSKS) and 201–234 (SKHH…WQQR). Residues 202–213 (KHHKEASHHNKK) show a composition bias toward basic residues. A compositionally biased stretch (basic and acidic residues) spans 223–234 (FKDREASRWQQR).

This chain is Orofacial cleft 1 candidate gene 1 protein homolog (OFCC1), found in Gallus gallus (Chicken).